Here is a 108-residue protein sequence, read N- to C-terminus: UPF0145 protein ACIAD2946 (108 aa).

The protein belongs to the UPF0145 family.

This Acinetobacter baylyi (strain ATCC 33305 / BD413 / ADP1) protein is UPF0145 protein ACIAD2946.